The following is a 287-amino-acid chain: ATP synthase gamma chain (287 aa).

This sequence belongs to the ATPase gamma chain family. In terms of assembly, F-type ATPases have 2 components, CF(1) - the catalytic core - and CF(0) - the membrane proton channel. CF(1) has five subunits: alpha(3), beta(3), gamma(1), delta(1), epsilon(1). CF(0) has three main subunits: a, b and c.

The protein localises to the cell inner membrane. In terms of biological role, produces ATP from ADP in the presence of a proton gradient across the membrane. The gamma chain is believed to be important in regulating ATPase activity and the flow of protons through the CF(0) complex. The sequence is that of ATP synthase gamma chain from Xylella fastidiosa (strain 9a5c).